The sequence spans 177 residues: Probable chemoreceptor glutamine deamidase CheD (177 aa).

The protein belongs to the CheD family.

It carries out the reaction L-glutaminyl-[protein] + H2O = L-glutamyl-[protein] + NH4(+). In terms of biological role, probably deamidates glutamine residues to glutamate on methyl-accepting chemotaxis receptors (MCPs), playing an important role in chemotaxis. The chain is Probable chemoreceptor glutamine deamidase CheD from Pseudomonas fluorescens (strain SBW25).